The following is a 384-amino-acid chain: 8-amino-7-oxononanoate synthase (384 aa).

Arg21 provides a ligand contact to substrate. Pyridoxal 5'-phosphate is bound at residue 108–109 (GF). Residue His133 participates in substrate binding. Pyridoxal 5'-phosphate is bound by residues Ser179, His207, and Thr233. Lys236 carries the post-translational modification N6-(pyridoxal phosphate)lysine. Residue Thr352 coordinates substrate.

It belongs to the class-II pyridoxal-phosphate-dependent aminotransferase family. BioF subfamily. Homodimer. The cofactor is pyridoxal 5'-phosphate.

It carries out the reaction 6-carboxyhexanoyl-[ACP] + L-alanine + H(+) = (8S)-8-amino-7-oxononanoate + holo-[ACP] + CO2. It participates in cofactor biosynthesis; biotin biosynthesis. Its function is as follows. Catalyzes the decarboxylative condensation of pimeloyl-[acyl-carrier protein] and L-alanine to produce 8-amino-7-oxononanoate (AON), [acyl-carrier protein], and carbon dioxide. This is 8-amino-7-oxononanoate synthase from Escherichia fergusonii (strain ATCC 35469 / DSM 13698 / CCUG 18766 / IAM 14443 / JCM 21226 / LMG 7866 / NBRC 102419 / NCTC 12128 / CDC 0568-73).